Consider the following 315-residue polypeptide: FGFR1 oncogene partner 2 homolog (315 aa).

Coiled coils occupy residues 32–99 (EEAE…RAME) and 156–183 (VVQRELQTISQLRLENETLRELLQISKQ). Disordered regions lie at residues 201–222 (KAVQTDSTADDSADDLSISGAS) and 238–315 (PEQP…APAT). A compositionally biased stretch (polar residues) spans 246–269 (GTTNSFNTAPVHSQSETQAPSVTL).

It belongs to the SIKE family.

The chain is FGFR1 oncogene partner 2 homolog from Drosophila melanogaster (Fruit fly).